Consider the following 586-residue polypeptide: FAD-linked oxidoreductase orf1 (586 aa).

A signal peptide spans 1-17 (MKSFATTVLLVTPGIYA). 12 N-linked (GlcNAc...) asparagine glycosylation sites follow: asparagine 29, asparagine 51, asparagine 79, asparagine 110, asparagine 146, asparagine 188, asparagine 314, asparagine 321, asparagine 358, asparagine 402, asparagine 434, and asparagine 461. An FAD-binding PCMH-type domain is found at 124-303 (TLGNYVSYAI…LSMTAKVHPD (180 aa)).

This sequence belongs to the oxygen-dependent FAD-linked oxidoreductase family.

It carries out the reaction betaenone C = betaenone A. It participates in mycotoxin biosynthesis. In terms of biological role, FAD-linked oxidoreductase; part of the gene cluster that mediates the biosynthesis of betaenones, phytotoxic polyketides involved in leaf spot disease in sugar beets. The first step of the pathway is the synthesis of dehydroprobetaenone I by the polyketide synthase bet1 and the enoyl reductase bet3 via condensation of one acetyl-CoA starter unit with 7 malonyl-CoA units and 5 methylations. The C-terminal reductase (R) domain of bet1 catalyzes the reductive release of the polyketide chain. Because bet1 lacks a designated enoylreductase (ER) domain, the required activity is provided the enoyl reductase bet3. The short-chain dehydrogenase/reductase bet4 then catalyzes reduction of dehydroprobetaenone I to probetaenone I. The cytochrome P450 monooxygenase bet2 catalyzes successive epoxidation, oxidation (resulting from epoxide opening) and hydroxylation to install a tertiary alcohol in the decaline ring to yield betaenone C from dehydroprobetaenone I and betaenone B from probetaenone I. The FAD-linked oxidoreductase (orf1) is probably responsible for the conversion of betaenone C to betaenone A via an intramolecular aldol reaction between C-1 and C-17 to form the bridged tricyclic system in betaenone A. This Neocamarosporium betae (Beet black rot fungus) protein is FAD-linked oxidoreductase orf1.